The sequence spans 1124 residues: Regulator of nonsense transcripts 1 (1124 aa).

The interval 1–410 (MSVEAYGPSS…LRSSVGAPVE (410 aa)) is sufficient for interaction with RENT2. Phosphoserine is present on residues Ser-10 and Ser-31. The tract at residues 39 to 69 (TLPSQTQTPPGGPGGAGGPGGAGAGGAAGQL) is disordered. Residues 51 to 66 (PGGAGGPGGAGAGGAA) are compositionally biased toward gly residues. Positions 110–267 (TKDLPVHACS…NKLEELWKEN (158 aa)) constitute a Upf1 CH-rich domain. Zn(2+)-binding residues include Cys-118, Cys-121, Cys-132, Ser-135, Cys-140, His-150, His-154, Cys-160, Cys-178, Cys-181, Cys-204, and Cys-208. A C3H region spans residues 118 to 150 (CSYCGIHDPACVVYCNTSKKWFCNGRGNTSGSH). A CC/SHH/C region spans residues 132 to 160 (CNTSKKWFCNGRGNTSGSHIVNHLVRAKC). Residues 178–208 (CYNCGCRNVFLLGFIPAKADSVVVLLCRQPC) are C4. ATP contacts are provided by residues Gln-481 and 501–505 (GTGKT). The residue at position 560 (Ser-560) is a Phosphoserine. ATP-binding residues include Gln-671, Tyr-708, and Glu-839. Phosphoserine is present on Ser-951. Disordered regions lie at residues 1004 to 1053 (FGQA…VASQ) and 1066 to 1091 (SMSQ…YLGD). Arg-1014 is modified (omega-N-methylarginine). Residues 1020–1029 (KTGRGGRQKN) show a composition bias toward basic residues. Residues 1036–1053 (PSQTTLPNSQASQDVASQ) show a composition bias toward polar residues. Positions 1066–1081 (SMSQPSQMSQPGLSQP) are enriched in low complexity. A phosphoserine mark is found at Ser-1084, Ser-1102, Ser-1105, and Ser-1122. 2 short sequence motifs ([ST]-Q motif) span residues 1084–1085 (SQ) and 1102–1103 (SQ). Residues 1105–1124 (STYQGERAYQHGGVTGLSQY) form a disordered region.

This sequence belongs to the DNA2/NAM7 helicase family. In terms of assembly, found in a post-splicing messenger ribonucleoprotein (mRNP) complex. Associates with the exon junction complex (EJC). Associates with the SGM1C complex; is phosphorylated by the complex kinase component SGM1. Part of a complex composed of SMG1, DHX34 and UPF1; within the complex DHX34 acts as a scaffolding protein to facilitate SMG1 phosphorylation of UPF1. Interacts with UPF2. Interacts with UPF3A and UPF3B. Interacts with EST1A. Interacts with SLBP. Interacts (when hyperphosphorylated) with PNRC2. Interacts with AGO1 and AGO2. Interacts with GSPT2. Interacts with isoform 1 and isoform 5 of ADAR/ADAR1. Interacts with SMG7. Interacts with ZC3H12A; this interaction occurs in a mRNA translationally active- and termination-dependent manner and is essential for ZC3H12A-mediated degradation of target mRNAs. Interacts with CPSF6. Interacts with MOV10; the interaction is direct and RNA-dependent. Interacts with SHFL; the interaction increases in the presence of RNA. Interacts with UPF2 and DDX4; interactions are mediated by TDRD6. Interacts with DHX34 and PABPC1/PABP1; the interactions are RNA-independent. Interacts with RBM46. Post-translationally, phosphorylated by SMG1; required for formation of mRNA surveillance complexes. Localizes in male germ cells.

It is found in the cytoplasm. Its subcellular location is the P-body. The protein resides in the nucleus. It localises to the perinuclear region. It carries out the reaction ATP + H2O = ADP + phosphate + H(+). Functionally, RNA-dependent helicase required for nonsense-mediated decay (NMD) of aberrant mRNAs containing premature stop codons and modulates the expression level of normal mRNAs. Is recruited to mRNAs upon translation termination and undergoes a cycle of phosphorylation and dephosphorylation; its phosphorylation appears to be a key step in NMD. Recruited by release factors to stalled ribosomes together with the SMG1C protein kinase complex to form the transient SURF (SMG1-UPF1-eRF1-eRF3) complex. In EJC-dependent NMD, the SURF complex associates with the exon junction complex (EJC) (located 50-55 or more nucleotides downstream from the termination codon) through UPF2 and allows the formation of an UPF1-UPF2-UPF3 surveillance complex which is believed to activate NMD. Phosphorylated UPF1 is recognized by EST1B/SMG5, SMG6 and SMG7 which are thought to provide a link to the mRNA degradation machinery involving exonucleolytic and endonucleolytic pathways, and to serve as adapters to protein phosphatase 2A (PP2A), thereby triggering UPF1 dephosphorylation and allowing the recycling of NMD factors. UPF1 can also activate NMD without UPF2 or UPF3, and in the absence of the NMD-enhancing downstream EJC indicative for alternative NMD pathways. Plays a role in replication-dependent histone mRNA degradation at the end of phase S; the function is independent of UPF2. For the recognition of premature termination codons (PTC) and initiation of NMD a competitive interaction between UPF1 and PABPC1 with the ribosome-bound release factors is proposed. The ATPase activity of UPF1 is required for disassembly of mRNPs undergoing NMD. Together with UPF2 and dependent on TDRD6, mediates the degradation of mRNA harboring long 3'UTR by inducing the NMD machinery. Also capable of unwinding double-stranded DNA and translocating on single-stranded DNA. In Mus musculus (Mouse), this protein is Regulator of nonsense transcripts 1.